We begin with the raw amino-acid sequence, 60 residues long: Potassium channel toxin alpha-KTx 12.7 (60 aa).

Positions 1–22 are cleaved as a signal peptide; sequence MSNMPVLIITLLLFSMYISTAA. Disulfide bonds link Cys30–Cys51, Cys36–Cys56, and Cys40–Cys58.

It belongs to the short scorpion toxin superfamily. Potassium channel inhibitor family. Alpha-KTx 12 subfamily. As to expression, expressed by the venom gland.

The protein localises to the secreted. Functionally, inhibits voltage-gated potassium channels. In Lychas mucronatus (Chinese swimming scorpion), this protein is Potassium channel toxin alpha-KTx 12.7.